Reading from the N-terminus, the 574-residue chain is 5'-nucleotidase (574 aa).

Positions 1-26 (MCPRAARAPATLLLALGAVLWPAAGA) are cleaved as a signal peptide. Zn(2+) is bound by residues aspartate 36 and histidine 38. Cysteine 51 and cysteine 57 are oxidised to a cystine. N-linked (GlcNAc...) asparagine glycosylation is present at asparagine 53. Zn(2+) is bound by residues aspartate 85, asparagine 117, histidine 220, and histidine 243. Asparagine 311 and asparagine 333 each carry an N-linked (GlcNAc...) asparagine glycan. Disulfide bonds link cysteine 353–cysteine 358 and cysteine 365–cysteine 387. Arginine 354 contributes to the AMP binding site. Arginine 354 serves as a coordination point for IMP. AMP-binding residues include asparagine 390 and arginine 395. Positions 390 and 395 each coordinate IMP. A glycan (N-linked (GlcNAc...) asparagine) is linked at asparagine 403. Phenylalanine 417 provides a ligand contact to AMP. Position 417 (phenylalanine 417) interacts with IMP. Residues cysteine 476 and cysteine 479 are joined by a disulfide bond. AMP contacts are provided by phenylalanine 500 and aspartate 506. Residues phenylalanine 500 and aspartate 506 each coordinate IMP. A lipid anchor (GPI-anchor amidated serine) is attached at serine 549. A propeptide spans 550–574 (TGSHCHGSFSLIFLSLWAVIFVLYQ) (removed in mature form).

This sequence belongs to the 5'-nucleotidase family. Homodimer. It depends on Zn(2+) as a cofactor.

It is found in the cell membrane. The enzyme catalyses a ribonucleoside 5'-phosphate + H2O = a ribonucleoside + phosphate. It catalyses the reaction a 2'-deoxyribonucleoside 5'-phosphate + H2O = a 2'-deoxyribonucleoside + phosphate. It carries out the reaction dTMP + H2O = thymidine + phosphate. The catalysed reaction is CMP + H2O = cytidine + phosphate. The enzyme catalyses IMP + H2O = inosine + phosphate. It catalyses the reaction AMP + H2O = adenosine + phosphate. It carries out the reaction GMP + H2O = guanosine + phosphate. The catalysed reaction is UMP + H2O = uridine + phosphate. The enzyme catalyses dAMP + H2O = 2'-deoxyadenosine + phosphate. It catalyses the reaction dCMP + H2O = 2'-deoxycytidine + phosphate. Its activity is regulated as follows. Inhibited by adenosine 5'-(alpha,beta-methylene)-diphosphate (AMPCP). In terms of biological role, catalyzes the hydrolysis of nucleotide monophosphates, releasing inorganic phosphate and the corresponding nucleoside, with AMP being the preferred substrate. Shows a preference for ribonucleotide monophosphates over their equivalent deoxyribose forms. Other substrates include IMP, UMP, GMP, CMP, dAMP, dCMP, dTMP, NAD and NMN. This Homo sapiens (Human) protein is 5'-nucleotidase (NT5E).